The primary structure comprises 152 residues: Deoxyuridine 5'-triphosphate nucleotidohydrolase (152 aa).

Substrate contacts are provided by residues 65-67 (RSG), N78, and 82-84 (TID).

It belongs to the dUTPase family. Mg(2+) is required as a cofactor.

The catalysed reaction is dUTP + H2O = dUMP + diphosphate + H(+). It participates in pyrimidine metabolism; dUMP biosynthesis; dUMP from dCTP (dUTP route): step 2/2. Functionally, this enzyme is involved in nucleotide metabolism: it produces dUMP, the immediate precursor of thymidine nucleotides and it decreases the intracellular concentration of dUTP so that uracil cannot be incorporated into DNA. The chain is Deoxyuridine 5'-triphosphate nucleotidohydrolase from Chlorobaculum tepidum (strain ATCC 49652 / DSM 12025 / NBRC 103806 / TLS) (Chlorobium tepidum).